We begin with the raw amino-acid sequence, 182 residues long: Probable nicotinate-nucleotide adenylyltransferase (182 aa).

It belongs to the NadD family.

The enzyme catalyses nicotinate beta-D-ribonucleotide + ATP + H(+) = deamido-NAD(+) + diphosphate. It functions in the pathway cofactor biosynthesis; NAD(+) biosynthesis; deamido-NAD(+) from nicotinate D-ribonucleotide: step 1/1. In terms of biological role, catalyzes the reversible adenylation of nicotinate mononucleotide (NaMN) to nicotinic acid adenine dinucleotide (NaAD). The sequence is that of Probable nicotinate-nucleotide adenylyltransferase from Sulfurimonas denitrificans (strain ATCC 33889 / DSM 1251) (Thiomicrospira denitrificans (strain ATCC 33889 / DSM 1251)).